Here is a 132-residue protein sequence, read N- to C-terminus: PGA2-homolog C27.01c (132 aa).

Residues 17–34 (WIRIIVYVGGYMLIRPYL) form a helical membrane-spanning segment. 2 disordered regions span residues 50–90 (LLEG…DAEF) and 106–132 (EYFK…HLED). A compositionally biased stretch (basic and acidic residues) spans 62-75 (EMTHGTKPKEHGEF). Acidic residues predominate over residues 76–87 (DTDDEEEEENPD). T77 bears the Phosphothreonine mark. Positions 106 to 115 (EYFKNQDKSP) are enriched in basic and acidic residues. The span at 119–132 (YADDDEDIEEHLED) shows a compositional bias: acidic residues.

This sequence belongs to the PGA2 family.

Its subcellular location is the endoplasmic reticulum membrane. It is found in the nucleus membrane. Involved processing and trafficking glycosylated proteins. In Schizosaccharomyces pombe (strain 972 / ATCC 24843) (Fission yeast), this protein is PGA2-homolog C27.01c.